A 573-amino-acid polypeptide reads, in one-letter code: Vacuolar protein 8 (573 aa).

Residues 1–36 (MAASAADRMGRQRMSGLSCSAPPRPTVVTNPGNKQD) are disordered. The span at 27–36 (VVTNPGNKQD) shows a compositional bias: polar residues. 9 ARM repeats span residues 60–97 (NRGE…FAEI), 98–137 (TEKD…NLAV), 139–178 (NENK…NLAT), 180–219 (EANK…NMTH), 221–260 (DQNR…NIAV), 264–303 (NRKK…NLAS), 305–344 (SDYQ…NISI), 346–386 (PLNE…NLAA), and 430–469 (DELK…NLSS).

Belongs to the beta-catenin family.

The protein localises to the vacuole membrane. In terms of biological role, functions in both vacuole inheritance and protein targeting from the cytoplasm to vacuole. The polypeptide is Vacuolar protein 8 (VAC8) (Yarrowia lipolytica (strain CLIB 122 / E 150) (Yeast)).